A 305-amino-acid polypeptide reads, in one-letter code: Nucleotide-binding protein Mjls_2437 (305 aa).

28 to 35 serves as a coordination point for ATP; the sequence is GLSGAGRG. GTP is bound at residue 79–82; the sequence is DVRS.

This sequence belongs to the RapZ-like family.

Displays ATPase and GTPase activities. The polypeptide is Nucleotide-binding protein Mjls_2437 (Mycobacterium sp. (strain JLS)).